The primary structure comprises 420 residues: Tyrosine--tRNA ligase (420 aa).

Tyr36 is an L-tyrosine binding site. A 'HIGH' region motif is present at residues 41–50 (PTADSLHIGH). L-tyrosine is bound by residues Tyr170 and Gln174. The 'KMSKS' region motif lies at 231 to 235 (KFGKS). Lys234 is a binding site for ATP. The 68-residue stretch at 353–420 (SNIIDVLIET…KKKYFMVNYK (68 aa)) folds into the S4 RNA-binding domain.

This sequence belongs to the class-I aminoacyl-tRNA synthetase family. TyrS type 1 subfamily. Homodimer.

It localises to the cytoplasm. The enzyme catalyses tRNA(Tyr) + L-tyrosine + ATP = L-tyrosyl-tRNA(Tyr) + AMP + diphosphate + H(+). Its function is as follows. Catalyzes the attachment of tyrosine to tRNA(Tyr) in a two-step reaction: tyrosine is first activated by ATP to form Tyr-AMP and then transferred to the acceptor end of tRNA(Tyr). This Staphylococcus haemolyticus (strain JCSC1435) protein is Tyrosine--tRNA ligase.